We begin with the raw amino-acid sequence, 240 residues long: Probable transcriptional regulatory protein VFMJ11_A0186 (240 aa).

It belongs to the TACO1 family.

It localises to the cytoplasm. The sequence is that of Probable transcriptional regulatory protein VFMJ11_A0186 from Aliivibrio fischeri (strain MJ11) (Vibrio fischeri).